A 350-amino-acid chain; its full sequence is Cephaeline 6'-O-methyltransferase CiOMT (350 aa).

Positions 193, 216, 236, 237, and 250 each coordinate S-adenosyl-L-methionine. The Proton acceptor role is filled by His254.

The protein belongs to the class I-like SAM-binding methyltransferase superfamily. Cation-independent O-methyltransferase family.

It is found in the cytoplasm. Its subcellular location is the cytosol. The catalysed reaction is 7'-O-demethylcephaeline + S-adenosyl-L-methionine = cephaeline + S-adenosyl-L-homocysteine + H(+). It carries out the reaction cephaeline + S-adenosyl-L-methionine = emetine + S-adenosyl-L-homocysteine + H(+). Its pathway is alkaloid biosynthesis. With respect to regulation, inhibited by Co(2+), Ni(2+), Zn(2+) and Mn(2+) ions. O-methyltransferase involved in the biosynthesis of ipecac and benzylisoquinoline monoterpenoid-isoquinoline alkaloids natural products, starting by the condensation of dopamine and secologanin, and including emetine and cephaeline, drugs used both as anti-protozoal (e.g. treatment of ameobiasis) and as emetic agents. Catalyzes successively the 7'-O-methylation of 7'-O-demethylcephaeline to produce cephaeline, and its 6'-O-methylation to produce emetine. In Carapichea ipecacuanha (Ipecac), this protein is Cephaeline 6'-O-methyltransferase CiOMT.